Here is a 199-residue protein sequence, read N- to C-terminus: Holliday junction branch migration complex subunit RuvA (199 aa).

The domain I stretch occupies residues 1–63 (MIGKLNGKID…EEHIHLYGFL (63 aa)). The domain II stretch occupies residues 64–141 (TLEEKNFFNL…TKIFSSSAII (78 aa)). Residues 141-145 (IKDSN) form a flexible linker region. The tract at residues 146–199 (ISSIAINEVMKALVNLGFTRFEAQNTVQGIITQNPKISIDELIKTALKNRNSSF) is domain III.

The protein belongs to the RuvA family. Homotetramer. Forms an RuvA(8)-RuvB(12)-Holliday junction (HJ) complex. HJ DNA is sandwiched between 2 RuvA tetramers; dsDNA enters through RuvA and exits via RuvB. An RuvB hexamer assembles on each DNA strand where it exits the tetramer. Each RuvB hexamer is contacted by two RuvA subunits (via domain III) on 2 adjacent RuvB subunits; this complex drives branch migration. In the full resolvosome a probable DNA-RuvA(4)-RuvB(12)-RuvC(2) complex forms which resolves the HJ.

Its subcellular location is the cytoplasm. The RuvA-RuvB-RuvC complex processes Holliday junction (HJ) DNA during genetic recombination and DNA repair, while the RuvA-RuvB complex plays an important role in the rescue of blocked DNA replication forks via replication fork reversal (RFR). RuvA specifically binds to HJ cruciform DNA, conferring on it an open structure. The RuvB hexamer acts as an ATP-dependent pump, pulling dsDNA into and through the RuvAB complex. HJ branch migration allows RuvC to scan DNA until it finds its consensus sequence, where it cleaves and resolves the cruciform DNA. The protein is Holliday junction branch migration complex subunit RuvA of Rickettsia prowazekii (strain Madrid E).